A 526-amino-acid chain; its full sequence is tRNA-2-methylthio-N(6)-dimethylallyladenosine synthase (526 aa).

Residues methionine 1–glutamate 24 form a disordered region. An MTTase N-terminal domain is found at arginine 28–histidine 144. The [4Fe-4S] cluster site is built by cysteine 37, cysteine 73, cysteine 107, cysteine 181, cysteine 185, and cysteine 188. The Radical SAM core domain occupies arginine 167–glutamate 403. A TRAM domain is found at glutamine 406–valine 477.

Belongs to the methylthiotransferase family. MiaB subfamily. As to quaternary structure, monomer. [4Fe-4S] cluster is required as a cofactor.

It localises to the cytoplasm. It carries out the reaction N(6)-dimethylallyladenosine(37) in tRNA + (sulfur carrier)-SH + AH2 + 2 S-adenosyl-L-methionine = 2-methylsulfanyl-N(6)-dimethylallyladenosine(37) in tRNA + (sulfur carrier)-H + 5'-deoxyadenosine + L-methionine + A + S-adenosyl-L-homocysteine + 2 H(+). In terms of biological role, catalyzes the methylthiolation of N6-(dimethylallyl)adenosine (i(6)A), leading to the formation of 2-methylthio-N6-(dimethylallyl)adenosine (ms(2)i(6)A) at position 37 in tRNAs that read codons beginning with uridine. The chain is tRNA-2-methylthio-N(6)-dimethylallyladenosine synthase from Corynebacterium glutamicum (strain R).